The primary structure comprises 317 residues: Apolipoprotein E (317 aa).

The N-terminal stretch at 1–18 (MKVLWAALLVTFLAGCQA) is a signal peptide. Tandem repeats lie at residues 80–101 (TLMD…EQLS), 102–123 (PVAE…ARLG), 124–145 (ADME…AMLG), 146–167 (QSTE…KRLL), 168–189 (RDAD…EGAE), 190–211 (RGVS…VRAA), 212–233 (TVGS…ERLR), and 234–255 (ARME…EQVA). The 8 X 22 AA approximate tandem repeats stretch occupies residues 80 to 255 (TLMDETMKEL…RLDEVKEQVA (176 aa)). Position 143 is a methionine sulfoxide (Met-143). A Phosphoserine modification is found at Ser-147. The LDL and other lipoprotein receptors binding stretch occupies residues 158–168 (HLRKLRKRLLR). 162-165 (LRKR) serves as a coordination point for heparin. The lipid-binding and lipoprotein association stretch occupies residues 210–290 (AATVGSLASQ…SWFEPLVEDM (81 aa)). Residue 229–236 (GERLRARM) coordinates heparin. A homooligomerization region spans residues 266–317 (QQISLQAEAFQARLKSWFEPLVEDMQRQWAGLVEKVQAAVGASTAPVPIDNH). The segment at 278-290 (RLKSWFEPLVEDM) is specificity for association with VLDL.

Belongs to the apolipoprotein A1/A4/E family. In terms of assembly, homotetramer. May interact with ABCA1; functionally associated with ABCA1 in the biogenesis of HDLs. May interact with APP/A4 amyloid-beta peptide; the interaction is extremely stable in vitro but its physiological significance is unclear. May interact with MAPT. May interact with MAP2. In the cerebrospinal fluid, interacts with secreted SORL1. Interacts with PMEL; this allows the loading of PMEL luminal fragment on ILVs to induce fibril nucleation. Post-translationally, APOE exists as multiple glycosylated and sialylated glycoforms within cells and in plasma. The extent of glycosylation and sialylation are tissue and context specific. Glycated in plasma VLDL. In terms of processing, phosphorylated by FAM20C in the extracellular medium.

It is found in the secreted. The protein localises to the extracellular space. It localises to the extracellular matrix. Its subcellular location is the extracellular vesicle. The protein resides in the endosome. It is found in the multivesicular body. APOE is an apolipoprotein, a protein associating with lipid particles, that mainly functions in lipoprotein-mediated lipid transport between organs via the plasma and interstitial fluids. APOE is a core component of plasma lipoproteins and is involved in their production, conversion and clearance. Apolipoproteins are amphipathic molecules that interact both with lipids of the lipoprotein particle core and the aqueous environment of the plasma. As such, APOE associates with chylomicrons, chylomicron remnants, very low density lipoproteins (VLDL) and intermediate density lipoproteins (IDL) but shows a preferential binding to high-density lipoproteins (HDL). It also binds a wide range of cellular receptors including the LDL receptor/LDLR, the LDL receptor-related proteins LRP1, LRP2 and LRP8 and the very low-density lipoprotein receptor/VLDLR that mediate the cellular uptake of the APOE-containing lipoprotein particles. Finally, APOE also has a heparin-binding activity and binds heparan-sulfate proteoglycans on the surface of cells, a property that supports the capture and the receptor-mediated uptake of APOE-containing lipoproteins by cells. A main function of APOE is to mediate lipoprotein clearance through the uptake of chylomicrons, VLDLs, and HDLs by hepatocytes. APOE is also involved in the biosynthesis by the liver of VLDLs as well as their uptake by peripheral tissues ensuring the delivery of triglycerides and energy storage in muscle, heart and adipose tissues. By participating in the lipoprotein-mediated distribution of lipids among tissues, APOE plays a critical role in plasma and tissues lipid homeostasis. APOE is also involved in two steps of reverse cholesterol transport, the HDLs-mediated transport of cholesterol from peripheral tissues to the liver, and thereby plays an important role in cholesterol homeostasis. First, it is functionally associated with ABCA1 in the biogenesis of HDLs in tissues. Second, it is enriched in circulating HDLs and mediates their uptake by hepatocytes. APOE also plays an important role in lipid transport in the central nervous system, regulating neuron survival and sprouting. This is Apolipoprotein E (APOE) from Macaca fascicularis (Crab-eating macaque).